The chain runs to 1034 residues: MNLAVPAFGLSTNWSGNGNGSNSEEESVLYQRLKMVEELWERVLQSECGQELVDLLTELRLQGTHEAITSEISEEVIMGITQRIEHLELNDAIRAARAFALYFQLINIVEQHYEQNEQQRNRWEASQETNFYEQAGNEEEMVPPSRLGASTEPLPVGIDQNELQASVGTFHWLMRELKRLNVPPQHIQNLLDHLDIRLVITAHPTEIVRHTIRRKQRRVDRILRKLDQLQGSVTGRDWLNTWDAKTAIAQLTEEIRFWWRTDELHQFKPTVLDEVDYSLHYFDEVLFDAVPELSKRLGQAIKETFPHLRAPRANFCYFGSWVGGDRDGNPSVTPEVTWQTACYQRGLVLGKYLFSLGELVAILSPSLHWCKVSQELLDSLERDRIQLPEIYEELSLRYRQEPYRMKLAYVTKRLENTLRRNNRLANPEERQTMITMPAENHYRTGEELLEELRLIQRNLTETGLTCLELENLITQLEVYGFNLAQLDFRQESSRHAEAIAEIAEYMGVLTTPYEEMAEEDKLAWLGVELQTRRPLIPQEMPFSERTRETIETLRTLRHLQMEFGVDICQTYIISMTNDASDVLEVLLLAKEAGLYDPATASNSLRIVPLFETVEDLKNAPGIMDSLFSLPFYRATLAGSYHSLKELQNQPPDYYQIPTTTALLNPGNLQEIMVGYSDSNKDSGFLSSNWEIHKAQKSLQAVAQSHRVILRLFHGRGGSVGRGGGPAYKAILAQPAGTVDGRIKITEQGEVLASKYSLPELALYNLETLTTAVIQASLLKSSFDFIEPWNRIMEELACTARRAYRSLIYEEPDFLDFFLTVTPIPEISELQISSRPARRKGGKADLSSLRAIPWVFSWTQTRFLLPAWYGVGTALKSFVDQDPVKNMKLLRYFYFKWPFFNMVISKVEMTLSKVDLTIASHYVQELSKPEDRERFDRLFQQIKQEYQLTRDFAMEITAHPHLLDGDRSLQRSVLLRNRTIVPLGLLQISLLKRLRQVTQEAETSGVRYRRYSKEELLRGALLTINGIAAGMRNTG.

Catalysis depends on residues His203 and Lys680.

Belongs to the PEPCase type 1 family. It depends on Mg(2+) as a cofactor.

It carries out the reaction oxaloacetate + phosphate = phosphoenolpyruvate + hydrogencarbonate. Its function is as follows. Forms oxaloacetate, a four-carbon dicarboxylic acid source for the tricarboxylic acid cycle. This Synechocystis sp. (strain ATCC 27184 / PCC 6803 / Kazusa) protein is Phosphoenolpyruvate carboxylase (ppc).